Here is a 372-residue protein sequence, read N- to C-terminus: Rab9 effector protein with kelch motifs (372 aa).

Kelch repeat units lie at residues 49–95 (KVFI…FIPS), 100–146 (RIWV…TSSA), 151–200 (QLYV…VMVA), 204–250 (KLFI…SAVA), and 254–303 (HVYI…IIPW). A Phosphoserine modification is found at serine 133. The segment at 314–340 (SNSLTLNHEAEKEDSADKVMSHSGDSH) is disordered. The segment covering 321–340 (HEAEKEDSADKVMSHSGDSH) has biased composition (basic and acidic residues).

As to quaternary structure, interacts with PIKFYVE; the interaction recruits RABEPK to the endosomal membrane. Interacts with RAB9 in its GTP-bound conformation. Phosphorylated on Ser residues by PIKFYVE.

The protein localises to the cytoplasm. Its subcellular location is the endosome membrane. In terms of biological role, rab9 effector required for endosome to trans-Golgi network (TGN) transport. The sequence is that of Rab9 effector protein with kelch motifs from Homo sapiens (Human).